We begin with the raw amino-acid sequence, 474 residues long: Lactococcin A secretion protein LcnD (474 aa).

The Cytoplasmic portion of the chain corresponds to 1–21 (MFDKKLLESSELYDKRYRNFS). Residues 22–44 (TLIILPLFILLVGGVIFTFFAHK) form a helical membrane-spanning segment. Topologically, residues 45 to 474 (ELTVISTGSI…LDKIMGRGNQ (430 aa)) are extracellular.

This sequence belongs to the membrane fusion protein (MFP) (TC 8.A.1) family.

Its subcellular location is the cell membrane. Its function is as follows. Involved in the secretion of lactococcin A. This Lactococcus lactis subsp. cremoris (Streptococcus cremoris) protein is Lactococcin A secretion protein LcnD (lcnD).